The following is an 879-amino-acid chain: Alanine--tRNA ligase (879 aa).

Residues His566, His570, Cys668, and His672 each contribute to the Zn(2+) site.

This sequence belongs to the class-II aminoacyl-tRNA synthetase family. The cofactor is Zn(2+).

The protein localises to the cytoplasm. The catalysed reaction is tRNA(Ala) + L-alanine + ATP = L-alanyl-tRNA(Ala) + AMP + diphosphate. In terms of biological role, catalyzes the attachment of alanine to tRNA(Ala) in a two-step reaction: alanine is first activated by ATP to form Ala-AMP and then transferred to the acceptor end of tRNA(Ala). Also edits incorrectly charged Ser-tRNA(Ala) and Gly-tRNA(Ala) via its editing domain. The polypeptide is Alanine--tRNA ligase (Halalkalibacterium halodurans (strain ATCC BAA-125 / DSM 18197 / FERM 7344 / JCM 9153 / C-125) (Bacillus halodurans)).